Consider the following 269-residue polypeptide: MPELPEIETIKRGLTSLIINQKVNKAILHRENLRWVIPKHLSTTLTNQLISTIDRRGKYLLIKFKVGTLIIHLGMSGSIKVVNTNTPLLKHEHFELQLKNGTSMRLKDPRRFGAVLFSKDGSHKLLDSLGVEPLKTSFYDGYLYQKSRNKQQNIKAFIMDNKIVVGVGNIYACESLFMAGINPKLKAGSISKTRYNVLTQCIKNILTQAIEAGGTTLQDFVQVNGNPGYFTQNLSVYGCKNKKCYRCKGIIIKFVQNQRSTFYCKKCQT.

The active-site Schiff-base intermediate with DNA is the P2. E3 serves as the catalytic Proton donor. K58 acts as the Proton donor; for beta-elimination activity in catalysis. DNA is bound by residues H91, R110, and K150. Residues 235-269 (SVYGCKNKKCYRCKGIIIKFVQNQRSTFYCKKCQT) form an FPG-type zinc finger. The active-site Proton donor; for delta-elimination activity is R259.

This sequence belongs to the FPG family. Monomer. Requires Zn(2+) as cofactor.

It carries out the reaction Hydrolysis of DNA containing ring-opened 7-methylguanine residues, releasing 2,6-diamino-4-hydroxy-5-(N-methyl)formamidopyrimidine.. The catalysed reaction is 2'-deoxyribonucleotide-(2'-deoxyribose 5'-phosphate)-2'-deoxyribonucleotide-DNA = a 3'-end 2'-deoxyribonucleotide-(2,3-dehydro-2,3-deoxyribose 5'-phosphate)-DNA + a 5'-end 5'-phospho-2'-deoxyribonucleoside-DNA + H(+). Involved in base excision repair of DNA damaged by oxidation or by mutagenic agents. Acts as a DNA glycosylase that recognizes and removes damaged bases. Has a preference for oxidized purines, such as 7,8-dihydro-8-oxoguanine (8-oxoG). Has AP (apurinic/apyrimidinic) lyase activity and introduces nicks in the DNA strand. Cleaves the DNA backbone by beta-delta elimination to generate a single-strand break at the site of the removed base with both 3'- and 5'-phosphates. The sequence is that of Formamidopyrimidine-DNA glycosylase from Vesicomyosocius okutanii subsp. Calyptogena okutanii (strain HA).